The sequence spans 324 residues: Polycomb complex protein BMI-1 (324 aa).

The RING-type zinc finger occupies 18–57 (CVLCGGYFIDATTIIECLHSFCKTCIVRYLETSKYCPICD). The short motif at 81–95 (KLVPGLFKNEMKRRR) is the Nuclear localization signal element. An interaction with PHC2 region spans residues 160 to 180 (RYLRCPAAMTVMHLRKFLRSK). An interaction with E4F1 region spans residues 162 to 226 (LRCPAAMTVM…GPLPLKYRVR (65 aa)). The tract at residues 232–324 (MKMSHQRDGL…LNGSSATSSG (93 aa)) is disordered. Positions 264–276 (PSTSSCLPSPSTP) are enriched in low complexity. The span at 277 to 307 (VQSPHPQFPHISSTMNGTSNSPSANHQSSFA) shows a compositional bias: polar residues. The span at 313–324 (SSLNGSSATSSG) shows a compositional bias: low complexity.

As to quaternary structure, component of a PRC1-like complex. Identified in a PRC1-like HPRC-H complex with CBX2, CBX4, CBX8, PHC1, PHC2, PHC3, RING1 and RNF2. Interacts with RNF2/RING2. Interacts with RING1. Part of a complex that contains RNF2, UB2D3 and BMI1, where RNF2 and BMI1 form a tight heterodimer, and UB2D3 interacts only with RNF2. The complex composed of RNF2, UB2D3 and BMI1 binds nucleosomes, and has activity only with nucleosomal histone H2A. Interacts with CBX7 and CBX8. Interacts with SPOP. Part of a complex consisting of BMI1, CUL3 and SPOP. Interacts with E4F1. Interacts with PHC2. Interacts with zinc finger protein ZNF277. May be part of a complex including at least ZNF277, BMI1 and RNF2/RING2. Post-translationally, may be polyubiquitinated; which does not lead to proteasomal degradation. Monoubiquitinated. As to expression, detected in most organs with high expression levels in thymus, heart, brain and testis.

The protein resides in the nucleus. The protein localises to the cytoplasm. Its function is as follows. Component of a Polycomb group (PcG) multiprotein PRC1-like complex, a complex class required to maintain the transcriptionally repressive state of many genes, including Hox genes, throughout development. PcG PRC1 complex acts via chromatin remodeling and modification of histones; it mediates monoubiquitination of histone H2A 'Lys-119', rendering chromatin heritably changed in its expressibility. The complex composed of RNF2, UB2D3 and BMI1 binds nucleosomes, and has activity only with nucleosomal histone H2A. In the PRC1-like complex, regulates the E3 ubiquitin-protein ligase activity of RNF2/RING2. The protein is Polycomb complex protein BMI-1 (Bmi1) of Mus musculus (Mouse).